The sequence spans 402 residues: S-adenosylmethionine synthase (402 aa).

Residue His-16 participates in ATP binding. Asp-18 is a Mg(2+) binding site. Position 44 (Glu-44) interacts with K(+). L-methionine-binding residues include Glu-57 and Gln-103. A flexible loop region spans residues 103 to 113; it reads QSPDIAQGVDT. ATP contacts are provided by residues 178 to 180, 249 to 250, Asp-258, 264 to 265, Ala-281, and Lys-285; these read DGK, KF, and RK. Position 258 (Asp-258) interacts with L-methionine. Lys-289 serves as a coordination point for L-methionine.

This sequence belongs to the AdoMet synthase family. In terms of assembly, homotetramer; dimer of dimers. Mg(2+) serves as cofactor. It depends on K(+) as a cofactor.

Its subcellular location is the cytoplasm. The enzyme catalyses L-methionine + ATP + H2O = S-adenosyl-L-methionine + phosphate + diphosphate. It participates in amino-acid biosynthesis; S-adenosyl-L-methionine biosynthesis; S-adenosyl-L-methionine from L-methionine: step 1/1. In terms of biological role, catalyzes the formation of S-adenosylmethionine (AdoMet) from methionine and ATP. The overall synthetic reaction is composed of two sequential steps, AdoMet formation and the subsequent tripolyphosphate hydrolysis which occurs prior to release of AdoMet from the enzyme. This is S-adenosylmethionine synthase from Mycolicibacterium vanbaalenii (strain DSM 7251 / JCM 13017 / BCRC 16820 / KCTC 9966 / NRRL B-24157 / PYR-1) (Mycobacterium vanbaalenii).